We begin with the raw amino-acid sequence, 364 residues long: tRNA-specific 2-thiouridylase MnmA 1 (364 aa).

ATP-binding positions include 11–18 (GMSGGTDS) and Phe-37. Cys-96 functions as the Nucleophile in the catalytic mechanism. A disulfide bridge connects residues Cys-96 and Cys-193. Gly-120 contacts ATP. Residues 142-144 (KDQ) are interaction with tRNA. Cys-193 acts as the Cysteine persulfide intermediate in catalysis. An interaction with tRNA region spans residues 309–310 (RY).

It belongs to the MnmA/TRMU family.

The protein resides in the cytoplasm. The catalysed reaction is S-sulfanyl-L-cysteinyl-[protein] + uridine(34) in tRNA + AH2 + ATP = 2-thiouridine(34) in tRNA + L-cysteinyl-[protein] + A + AMP + diphosphate + H(+). Catalyzes the 2-thiolation of uridine at the wobble position (U34) of tRNA, leading to the formation of s(2)U34. This chain is tRNA-specific 2-thiouridylase MnmA 1, found in Bacteroides fragilis (strain ATCC 25285 / DSM 2151 / CCUG 4856 / JCM 11019 / LMG 10263 / NCTC 9343 / Onslow / VPI 2553 / EN-2).